Here is a 141-residue protein sequence, read N- to C-terminus: Putative antiporter subunit mnhB2 (141 aa).

The next 4 membrane-spanning stretches (helical) occupy residues 10–30, 35–55, 70–90, and 114–134; these read TVTKLVVFILLTFGFYVFFAG, GGGFIGGLIFSSAFILMFLAF, ILMIIGALVSSITAIIPMFFG, and ITLFELGILFSVVGVIVTVML.

It belongs to the CPA3 antiporters (TC 2.A.63) subunit B family. As to quaternary structure, may form a heterooligomeric complex that consists of seven subunits: mnhA2, mnhB2, mnhC2, mnhD2, mnhE2, mnhF2 and mnhG2.

The protein resides in the cell membrane. The protein is Putative antiporter subunit mnhB2 (mnhB2) of Staphylococcus aureus (strain Mu3 / ATCC 700698).